Here is a 288-residue protein sequence, read N- to C-terminus: Small ribosomal subunit protein uS2 (288 aa).

Residues 255 to 288 form a disordered region; that stretch reads ANNRDHKNNKNNSTIDNAENLKEENLVGGSNNES.

Belongs to the universal ribosomal protein uS2 family.

The protein is Small ribosomal subunit protein uS2 of Ehrlichia chaffeensis (strain ATCC CRL-10679 / Arkansas).